Consider the following 177-residue polypeptide: B-phycoerythrin beta chain (177 aa).

2 residues coordinate phycourobilin: Cys50 and Cys61. Asn72 is modified (N4-methylasparagine). Residues Cys82 and Cys158 each coordinate (2R,3E)-phycoerythrobilin.

It belongs to the phycobiliprotein family. As to quaternary structure, heteromer of 6 alpha, 6 beta and one gamma chain. In terms of processing, contains two covalently linked phycoerythrobilin chromophores and one covalently linked phycourobilin chromophore.

Its subcellular location is the plastid. It is found in the chloroplast thylakoid membrane. In terms of biological role, light-harvesting photosynthetic bile pigment-protein from the phycobiliprotein complex. This is B-phycoerythrin beta chain (cpeB) from Porphyridium sordidum (Red alga).